The following is a 406-amino-acid chain: Exodeoxyribonuclease 7 large subunit (406 aa).

It belongs to the XseA family. As to quaternary structure, heterooligomer composed of large and small subunits.

It localises to the cytoplasm. It carries out the reaction Exonucleolytic cleavage in either 5'- to 3'- or 3'- to 5'-direction to yield nucleoside 5'-phosphates.. Functionally, bidirectionally degrades single-stranded DNA into large acid-insoluble oligonucleotides, which are then degraded further into small acid-soluble oligonucleotides. The sequence is that of Exodeoxyribonuclease 7 large subunit from Desulforudis audaxviator (strain MP104C).